Here is a 271-residue protein sequence, read N- to C-terminus: Phosphoglycerate mutase-like protein (271 aa).

The active-site Tele-phosphohistidine intermediate is His-22. Glu-134 functions as the Proton donor/acceptor in the catalytic mechanism. The segment at 252–271 (SAETTNYPGKVPEGLDNPSG) is disordered.

It belongs to the phosphoglycerate mutase family. Expressed in the shoot apical meristem and meristematic zone of the root tips.

In terms of biological role, may play a role in carbohydrates metabolism. The polypeptide is Phosphoglycerate mutase-like protein (Arabidopsis thaliana (Mouse-ear cress)).